Here is a 1538-residue protein sequence, read N- to C-terminus: MFNQKIVDQAPRKLTSRLTNSSSLISIEKERDACGVGFIADVNNVANHKIVVQALEALTCMEHRGACSADRDSGDGAGITTAIPWNLFQKSLQNQNIKFEQNDSVGVGMLFLPAHKLKESKLIIETVLKEENLEIIGWRLVPTVQEVLGKQAYLNKPHVEQVFCKSSNLSKDRLEQQLFLVRKKIEKYIGINGKDWAHEFYICSLSCYTIVYKGMMRSAVLGQFYQDLYHSEYTSSFAIYHRRFSTNTMPKWPLAQPMRFVSHNGEINTLLGNLNWMQSREPLLQSKVWKDRIHELKPITNKDNSDSANLDAAVELLIASGRSPEEALMILVPEAFQNQPDFANNTEISDFYEYYSGLQEPWDGPALVVFTNGKVIGATLDRNGLRPARYVITKDNLVIVSSESGVVQVEPGNVKSKGRLGPGQMISVDIFSHKILNNKEIKTSVTTKIPYGELLTDARQILEHKPFLSDQQVDIKKLMQLQTAFGYTNEDVELVIEHMASQAKEPTFCMGDDIPLSILSEKSHILYDYFKQRFAQVTNPAIDPLRESLVMSLAIQIGHKSNLLDDQPTLAKHIKLESPVINEGELNAIFESKLSCIRINTLFQLEDGPKNFKQQIQQLCENASQAILDGNNILVLSDKNNSLDSEKVSIPPLLAVGAVHHHLINKGLRQEASILVETAQCWSTHHFACLIGYGASAICPYLAFETARHWWSNPKTKMLMSKGRLPACNIQEAQANYKKAVEAGLLKILSKMGISLLSSYHGAQIFEILGLGSEVVNLAFKGTTSQIGGLSMIELGRETVNIHSKAFSEVKTKKLANYGFVQYRPGGEYHINNPEMSKALHQAVRGYNPEYYNNYQSLLQNRPPTALRDLLKLQSNRAPISIDEVESIEDILQKFCTGGMSLGALSRETHETLAIAMNRIGGKSNSGEGGEDPVRFKILNDVNSSGTSPLLPHLKGLKNGDTASSAIKQIASGRFGVTPEYLMNAKQLEIKIAQGAKPGEGGQLPGKKISPYIATLRKCKPGVPLISPPPHHDIYSIEDLSQLIFDLHQINPKAKISVKLVSEIGIGTIAAGVAKGNADIIQISGHDGGTGASPLSSIKHAGSPWELGLSEVHQLLAENQLRDRVTLRVDGGLRTGSDIVLAAIMGAEEFGFGTVAMIATGCIMARICHTNKCPVGVATQREELRARFSGVPEALVNFFLFIGNEVREILASLGYKSLDDITGQNHLLIKNTDINLTKTNGIQLDTLININNNTWTKFNSVHTNGPVMDDDILAIPEVSNAIKLETEITKHFKIANTNRTVGTRLSGIIAKNYGNTGFKGLIKLNFYGSAGQSFGAFLASGINLKLMGEANDYVGKGMNGGSIVIVPPAGTIYEDNNQVIIGNTCLYGATGGYLFAQGQAGERFAVRNSLAESVVEGVGDHACEYMTGGVIVVLGKAGRNVGAGMTGGLAYFLDEDENFIDRVNSEIVKIQRVITKAGEEQLKNLIENHAAKTGSLKAHTILEKWNSYLPQFWQVVPPSEANIDETNPTYSSNTIAAC.

C34 acts as the For GATase activity in catalysis. Positions 34–431 (CGVGFIADVN…PGQMISVDIF (398 aa)) constitute a Glutamine amidotransferase type-2 domain. 1109–1166 (LSEVHQLLAENQLRDRVTLRVDGGLRTGSDIVLAAIMGAEEFGFGTVAMIATGCIMAR) is a binding site for FMN. [3Fe-4S] cluster is bound by residues C1162, C1168, and C1173.

Belongs to the glutamate synthase family. As to quaternary structure, monomer. The cofactor is [3Fe-4S] cluster. FAD is required as a cofactor. FMN serves as cofactor.

The protein resides in the plastid. The protein localises to the chloroplast stroma. It carries out the reaction 2 oxidized [2Fe-2S]-[ferredoxin] + 2 L-glutamate = L-glutamine + 2 reduced [2Fe-2S]-[ferredoxin] + 2-oxoglutarate + 2 H(+). Its pathway is amino-acid biosynthesis; L-glutamate biosynthesis via GLT pathway; L-glutamate from 2-oxoglutarate and L-glutamine (ferredoxin route): step 1/1. The protein operates within energy metabolism; nitrogen metabolism. This is Ferredoxin-dependent glutamate synthase (gltB) from Pyropia yezoensis (Susabi-nori).